The primary structure comprises 761 residues: Mitochondrial intermediate peptidase 1 (761 aa).

His-530 provides a ligand contact to Zn(2+). Glu-531 is an active-site residue. Positions 534 and 537 each coordinate Zn(2+).

Belongs to the peptidase M3 family. Zn(2+) serves as cofactor.

It localises to the mitochondrion matrix. It carries out the reaction Release of an N-terminal octapeptide as second stage of processing of some proteins imported into the mitochondrion.. Cleaves proteins, imported into the mitochondrion, to their mature size. While most mitochondrial precursor proteins are processed to the mature form in one step by mitochondrial processing peptidase (MPP), the sequential cleavage by MIP of an octapeptide after initial processing by MPP is a required step for a subgroup of nuclear-encoded precursor proteins destined for the matrix or the inner membrane. The chain is Mitochondrial intermediate peptidase 1 (OCT1) from Cryptococcus neoformans var. neoformans serotype D (strain B-3501A) (Filobasidiella neoformans).